The sequence spans 235 residues: Uridylate kinase (235 aa).

ATP is bound at residue Lys12–Gly15. Gly54 lines the UMP pocket. ATP contacts are provided by Gly55 and Arg59. UMP contacts are provided by residues Asp72 and Thr133–Thr140. Tyr166 and Asp169 together coordinate ATP.

Belongs to the UMP kinase family. As to quaternary structure, homohexamer.

It localises to the cytoplasm. The enzyme catalyses UMP + ATP = UDP + ADP. It participates in pyrimidine metabolism; CTP biosynthesis via de novo pathway; UDP from UMP (UMPK route): step 1/1. Inhibited by UTP. Functionally, catalyzes the reversible phosphorylation of UMP to UDP. In Acetivibrio thermocellus (strain ATCC 27405 / DSM 1237 / JCM 9322 / NBRC 103400 / NCIMB 10682 / NRRL B-4536 / VPI 7372) (Clostridium thermocellum), this protein is Uridylate kinase.